A 389-amino-acid polypeptide reads, in one-letter code: NAD-dependent protein deacetylase sirtuin-2 (389 aa).

A disordered region spans residues 1 to 34 (MAEPDPSHPLETQAGKVQEAQDSDSDSEGGAAGG). An N-acetylalanine modification is found at alanine 2. Residues serine 23, serine 25, serine 27, and serine 53 each carry the phosphoserine modification. Residues 57-338 (RLLDELTLEG…LALAELLGWK (282 aa)) enclose the Deacetylase sirtuin-type domain. NAD(+) contacts are provided by residues 85–89 (AGIST) and 95–97 (DFR). Serine 100 bears the Phosphoserine mark. Residue 167–170 (QNID) participates in NAD(+) binding. The active-site Proton acceptor is the histidine 187. The Zn(2+) site is built by cysteine 195 and cysteine 200. Serine 207 is subject to Phosphoserine. Residues cysteine 221 and cysteine 224 each contribute to the Zn(2+) site. NAD(+)-binding positions include 262–263 (TS), 286–288 (NKE), and cysteine 324. The disordered stretch occupies residues 350–389 (ASIDAQSGAEAPNPSTSASPRKSPPPAQDEARTTEREKPQ). Phosphoserine is present on residues serine 368 and serine 372. The segment covering 378-389 (DEARTTEREKPQ) has biased composition (basic and acidic residues).

This sequence belongs to the sirtuin family. Class I subfamily. As to quaternary structure, interacts with CDC20, FOXO3 and FZR1. Associates with microtubules in primary cortical mature neurons. Homotrimer. Interacts (via both phosphorylated, unphosphorylated, active or inactive forms) with HDAC6; the interaction is necessary for the complex to interact with alpha-tubulin, suggesting that these proteins belong to a large complex that deacetylates the cytoskeleton. Interacts with FOXO1; the interaction is disrupted upon serum-starvation or oxidative stress, leading to increased level of acetylated FOXO1 and induction of autophagy. Interacts with RELA; the interaction occurs in the cytoplasm and is increased in a TNF-alpha-dependent manner. Interacts with HOXA10; the interaction is direct. Interacts with YWHAB and YWHAG; the interactions occur in a AKT-dependent manner and increase SIRT2-dependent TP53 deacetylation. Interacts with MAPK1/ERK2 and MAPK3/ERK1; the interactions increase SIRT2 stability and deacetylation activity. Interacts (phosphorylated form) with KMT5A isoform 2; the interaction is direct, stimulates KMT5A-mediated methyltransferase activity on histone at 'Lys-20' (H4K20me1) and is increased in a H(2)O(2)-induced oxidative stress-dependent manner. Interacts with G6PD; the interaction is enhanced by H(2)O(2) treatment. Interacts with a G1/S-specific cyclin E-CDK2 complex. Interacts with AURKA, CDK5R1 (p35 form) and CDK5 and HIF1A. Interacts with the tRNA ligase SARS1; recruited to the VEGFA promoter via interaction with SARS1. Interacts with BEX4; negatively regulates alpha-tubulin deacetylation by SIRT2. Zn(2+) is required as a cofactor. Phosphorylated at phosphoserine and phosphothreonine. Phosphorylated at Ser-368 by a mitotic kinase CDK1/cyclin B at the G2/M transition; phosphorylation regulates the delay in cell-cycle progression. Phosphorylated at Ser-368 by a mitotic kinase G1/S-specific cyclin E/Cdk2 complex; phosphorylation inactivates SIRT2-mediated alpha-tubulin deacetylation and thereby negatively regulates cell adhesion, cell migration and neurite outgrowth during neuronal differentiation. Phosphorylated by cyclin A/Cdk2 and p35-Cdk5 complexes and to a lesser extent by the cyclin D3/Cdk4 and cyclin B/Cdk1, in vitro. Dephosphorylated at Ser-368 by CDC14A and CDC14B around early anaphase. Post-translationally, acetylated by EP300; acetylation leads both to the decreased of SIRT2-mediated alpha-tubulin deacetylase activity and SIRT2-mediated down-regulation of TP53 transcriptional activity. In terms of processing, ubiquitinated.

The protein localises to the nucleus. It localises to the cytoplasm. It is found in the perinuclear region. Its subcellular location is the cytoskeleton. The protein resides in the microtubule organizing center. The protein localises to the centrosome. It localises to the centriole. It is found in the spindle. Its subcellular location is the midbody. The protein resides in the chromosome. The protein localises to the perikaryon. It localises to the cell projection. It is found in the growth cone. Its subcellular location is the myelin membrane. It carries out the reaction N(6)-acetyl-L-lysyl-[protein] + NAD(+) + H2O = 2''-O-acetyl-ADP-D-ribose + nicotinamide + L-lysyl-[protein]. The enzyme catalyses N(6)-tetradecanoyl-L-lysyl-[protein] + NAD(+) + H2O = 2''-O-tetradecanoyl-ADP-D-ribose + nicotinamide + L-lysyl-[protein]. The catalysed reaction is N(6)-hexadecanoyl-L-lysyl-[protein] + NAD(+) + H2O = 2''-O-hexadecanoyl-ADP-D-ribose + nicotinamide + L-lysyl-[protein]. Its activity is regulated as follows. Inhibited by Sirtinol, A3 and M15 small molecules. Inhibited by nicotinamide. Its function is as follows. NAD-dependent protein deacetylase, which deacetylates internal lysines on histone and alpha-tubulin as well as many other proteins such as key transcription factors. Participates in the modulation of multiple and diverse biological processes such as cell cycle control, genomic integrity, microtubule dynamics, cell differentiation, metabolic networks, and autophagy. Plays a major role in the control of cell cycle progression and genomic stability. Functions in the antephase checkpoint preventing precocious mitotic entry in response to microtubule stress agents, and hence allowing proper inheritance of chromosomes. Positively regulates the anaphase promoting complex/cyclosome (APC/C) ubiquitin ligase complex activity by deacetylating CDC20 and FZR1, then allowing progression through mitosis. Associates both with chromatin at transcriptional start sites (TSSs) and enhancers of active genes. Plays a role in cell cycle and chromatin compaction through epigenetic modulation of the regulation of histone H4 'Lys-20' methylation (H4K20me1) during early mitosis. Specifically deacetylates histone H4 at 'Lys-16' (H4K16ac) between the G2/M transition and metaphase enabling H4K20me1 deposition by KMT5A leading to ulterior levels of H4K20me2 and H4K20me3 deposition throughout cell cycle, and mitotic S-phase progression. Deacetylates KMT5A modulating KMT5A chromatin localization during the mitotic stress response. Also deacetylates histone H3 at 'Lys-57' (H3K56ac) during the mitotic G2/M transition. During oocyte meiosis progression, may deacetylate histone H4 at 'Lys-16' (H4K16ac) and alpha-tubulin, regulating spindle assembly and chromosome alignment by influencing microtubule dynamics and kinetochore function. Deacetylates histone H4 at 'Lys-16' (H4K16ac) at the VEGFA promoter and thereby contributes to regulate expression of VEGFA, a key regulator of angiogenesis. Deacetylates alpha-tubulin at 'Lys-40' and hence controls neuronal motility, oligodendroglial cell arbor projection processes and proliferation of non-neuronal cells. Phosphorylation at Ser-368 by a G1/S-specific cyclin E-CDK2 complex inactivates SIRT2-mediated alpha-tubulin deacetylation, negatively regulating cell adhesion, cell migration and neurite outgrowth during neuronal differentiation. Deacetylates PARD3 and participates in the regulation of Schwann cell peripheral myelination formation during early postnatal development and during postinjury remyelination. Involved in several cellular metabolic pathways. Plays a role in the regulation of blood glucose homeostasis by deacetylating and stabilizing phosphoenolpyruvate carboxykinase PCK1 activity in response to low nutrient availability. Acts as a key regulator in the pentose phosphate pathway (PPP) by deacetylating and activating the glucose-6-phosphate G6PD enzyme, and therefore, stimulates the production of cytosolic NADPH to counteract oxidative damage. Maintains energy homeostasis in response to nutrient deprivation as well as energy expenditure by inhibiting adipogenesis and promoting lipolysis. Attenuates adipocyte differentiation by deacetylating and promoting FOXO1 interaction to PPARG and subsequent repression of PPARG-dependent transcriptional activity. Plays a role in the regulation of lysosome-mediated degradation of protein aggregates by autophagy in neuronal cells. Deacetylates FOXO1 in response to oxidative stress or serum deprivation, thereby negatively regulating FOXO1-mediated autophagy. Deacetylates a broad range of transcription factors and co-regulators regulating target gene expression. Deacetylates transcriptional factor FOXO3 stimulating the ubiquitin ligase SCF(SKP2)-mediated FOXO3 ubiquitination and degradation. Deacetylates HIF1A and therefore promotes HIF1A degradation and inhibition of HIF1A transcriptional activity in tumor cells in response to hypoxia. Deacetylates RELA in the cytoplasm inhibiting NF-kappaB-dependent transcription activation upon TNF-alpha stimulation. Inhibits transcriptional activation by deacetylating p53/TP53 and EP300. Also deacetylates EIF5A. Functions as a negative regulator on oxidative stress-tolerance in response to anoxia-reoxygenation conditions. Plays a role as tumor suppressor. In addition to protein deacetylase activity, also has activity toward long-chain fatty acyl groups and mediates protein-lysine demyristoylation and depalmitoylation of target proteins, such as ARF6 and KRAS, thereby regulating their association with membranes. The polypeptide is NAD-dependent protein deacetylase sirtuin-2 (SIRT2) (Macaca fascicularis (Crab-eating macaque)).